The sequence spans 373 residues: ATP phosphoribosyltransferase regulatory subunit (373 aa).

Belongs to the class-II aminoacyl-tRNA synthetase family. HisZ subfamily. In terms of assembly, heteromultimer composed of HisG and HisZ subunits.

It is found in the cytoplasm. The protein operates within amino-acid biosynthesis; L-histidine biosynthesis; L-histidine from 5-phospho-alpha-D-ribose 1-diphosphate: step 1/9. Functionally, required for the first step of histidine biosynthesis. May allow the feedback regulation of ATP phosphoribosyltransferase activity by histidine. In Rhizobium etli (strain CIAT 652), this protein is ATP phosphoribosyltransferase regulatory subunit.